The primary structure comprises 178 residues: Ribonuclease M5 (178 aa).

The Toprim domain occupies 4–100; the sequence is NEFIVVEGRD…KIGVEHADLI (97 aa). Glu-10, Asp-56, and Asp-58 together coordinate Mg(2+).

This sequence belongs to the ribonuclease M5 family. It depends on Mg(2+) as a cofactor.

It is found in the cytoplasm. The catalysed reaction is Endonucleolytic cleavage of RNA, removing 21 and 42 nucleotides, respectively, from the 5'- and 3'-termini of a 5S-rRNA precursor.. Its function is as follows. Required for correct processing of both the 5' and 3' ends of 5S rRNA precursor. Cleaves both sides of a double-stranded region yielding mature 5S rRNA in one step. The chain is Ribonuclease M5 from Staphylococcus aureus (strain NCTC 8325 / PS 47).